Here is a 106-residue protein sequence, read N- to C-terminus: MPRFTIHDLAETIDARAAAGGEGSYTRKLLDKGAEHCAKKFGEEAVETVIAAVENDRAHLIAEGADLLYHFLVLLKARGIKLEEVEAALGKRTSMSGLEEKASRKE.

Belongs to the PRA-PH family.

Its subcellular location is the cytoplasm. The enzyme catalyses 1-(5-phospho-beta-D-ribosyl)-ATP + H2O = 1-(5-phospho-beta-D-ribosyl)-5'-AMP + diphosphate + H(+). It functions in the pathway amino-acid biosynthesis; L-histidine biosynthesis; L-histidine from 5-phospho-alpha-D-ribose 1-diphosphate: step 2/9. This Bradyrhizobium diazoefficiens (strain JCM 10833 / BCRC 13528 / IAM 13628 / NBRC 14792 / USDA 110) protein is Phosphoribosyl-ATP pyrophosphatase 1 (hisE1).